We begin with the raw amino-acid sequence, 954 residues long: Chromosomal passenger complex protein BIR1 (954 aa).

BIR repeat units lie at residues arginine 20–tyrosine 117 and arginine 153–glutamine 241. Residues cysteine 208, cysteine 211, histidine 228, and cysteine 237 each contribute to the Zn(2+) site. Residues asparagine 375–lysine 419 form a disordered region. Residues isoleucine 385 to proline 396 show a composition bias toward basic residues. Phosphoserine is present on residues serine 477, serine 508, and serine 552. Disordered stretches follow at residues aspartate 541 to valine 645 and phenylalanine 661 to proline 685. The span at proline 556 to threonine 583 shows a compositional bias: basic and acidic residues. At serine 587 the chain carries Phosphoserine. Over residues serine 593 to threonine 604 the composition is skewed to polar residues. 2 positions are modified to phosphoserine: serine 751 and serine 765. Residues leucine 798 to lysine 839 form a disordered region. The span at serine 809 to threonine 818 shows a compositional bias: basic and acidic residues. A compositionally biased stretch (polar residues) spans serine 819–glycine 835.

In terms of assembly, component of the CPC complex at least composed of IPL1, BIR1 and SLI15. Interacts with CBF2/NDC10. Interacts with CBF3D/SKP1.

In terms of biological role, component of the chromosomal passenger complex (CPC), a complex that acts as a key regulator of chromosome segregation and cytokinesis. The chain is Chromosomal passenger complex protein BIR1 (BIR1) from Saccharomyces cerevisiae (strain ATCC 204508 / S288c) (Baker's yeast).